The primary structure comprises 229 residues: Artemin (229 aa).

Position 1 is an N-acetylalanine (A1). Residues 25 to 173 (HNFDPECEKA…DCLSNLHCIG (149 aa)) form the Ferritin-like diiron domain.

The protein belongs to the ferritin family.

This chain is Artemin, found in Artemia salina (Brine shrimp).